Here is a 283-residue protein sequence, read N- to C-terminus: Bis(5'-nucleosyl)-tetraphosphatase, symmetrical (283 aa).

It belongs to the Ap4A hydrolase family.

It catalyses the reaction P(1),P(4)-bis(5'-adenosyl) tetraphosphate + H2O = 2 ADP + 2 H(+). In terms of biological role, hydrolyzes diadenosine 5',5'''-P1,P4-tetraphosphate to yield ADP. The sequence is that of Bis(5'-nucleosyl)-tetraphosphatase, symmetrical from Pseudomonas aeruginosa (strain LESB58).